The primary structure comprises 507 residues: ATP synthase subunit alpha, chloroplastic (507 aa).

An ATP-binding site is contributed by 170-177 (GDRQTGKT).

This sequence belongs to the ATPase alpha/beta chains family. In terms of assembly, F-type ATPases have 2 components, CF(1) - the catalytic core - and CF(0) - the membrane proton channel. CF(1) has five subunits: alpha(3), beta(3), gamma(1), delta(1), epsilon(1). CF(0) has four main subunits: a, b, b' and c.

It is found in the plastid. It localises to the chloroplast thylakoid membrane. The catalysed reaction is ATP + H2O + 4 H(+)(in) = ADP + phosphate + 5 H(+)(out). Its function is as follows. Produces ATP from ADP in the presence of a proton gradient across the membrane. The alpha chain is a regulatory subunit. The sequence is that of ATP synthase subunit alpha, chloroplastic from Citrus sinensis (Sweet orange).